A 790-amino-acid polypeptide reads, in one-letter code: Pentatricopeptide repeat-containing protein OTP51, chloroplastic (790 aa).

Residues 1–56 (MATTSPCAAPSPSLRCPLALSHPFASPPPPPALRLAGPKLLPGRLAVSPPPGIPAV) constitute a chloroplast transit peptide. PPR repeat units lie at residues 182-216 (NFALATRVADCLGRDGKVEKCREVFEAMVKQGRVP), 217-254 (AESTFHILIVAYLSVPKGRCLEEACTIYNQMIQMGGYK), 256-296 (RLSL…NLDV), 299-333 (DVYAGLIWLHSYQDVIDRERIIALRKEMKQAGFDE), 334-368 (GIDVLVSVMRAFSKEGNVAETEATWHNILQSGSDL), 369-403 (PVQAYVCRMEAYARTGEPMKSLDMFKEMKDKNIPP), 404-438 (NVASYHKIIEIMTKALEVDIVEQLMNEFIESDMKH), 439-469 (LMPAFLDLMYMYMDLDMHEKLELTFLKCIAR), 473-507 (NRILYTIYLESLVKVGNIEKAEEVFGEMHNNGMIG), and 509-543 (NTKSCNIMLRGYLSAEDYQKAEKVYDMMSKKKYDV). The disordered stretch occupies residues 762 to 790 (GSSIGSDGTQDTDTDSDDDMQMSDTERDE). Over residues 771 to 790 (QDTDTDSDDDMQMSDTERDE) the composition is skewed to acidic residues.

The protein belongs to the PPR family. P subfamily.

The protein resides in the plastid. It localises to the chloroplast. Functionally, promotes the splicing of group II introns in chloroplasts. Required for the splicing of intron 2 of plastid ycf3 transcripts, a factor required for the assembly of photosystem I (PSI). Involved in the splicing of atpF, ndhA, petB and rps16 chloroplastic transcripts. Required for the assembly of PSI. In Oryza sativa subsp. japonica (Rice), this protein is Pentatricopeptide repeat-containing protein OTP51, chloroplastic.